Here is a 100-residue protein sequence, read N- to C-terminus: Urease subunit gamma (100 aa).

This sequence belongs to the urease gamma subunit family. Heterotrimer of UreA (gamma), UreB (beta) and UreC (alpha) subunits. Three heterotrimers associate to form the active enzyme.

It localises to the cytoplasm. The catalysed reaction is urea + 2 H2O + H(+) = hydrogencarbonate + 2 NH4(+). Its pathway is nitrogen metabolism; urea degradation; CO(2) and NH(3) from urea (urease route): step 1/1. This is Urease subunit gamma from Pseudomonas aeruginosa (strain LESB58).